We begin with the raw amino-acid sequence, 392 residues long: Phosphoglycerate kinase (392 aa).

Residues 21–23, Arg-36, 59–62, Arg-114, and Arg-147 contribute to the substrate site; these read DMN and HLGR. Residues Lys-198, Glu-320, and 346–349 each bind ATP; that span reads GGDT.

This sequence belongs to the phosphoglycerate kinase family. Monomer.

Its subcellular location is the cytoplasm. It catalyses the reaction (2R)-3-phosphoglycerate + ATP = (2R)-3-phospho-glyceroyl phosphate + ADP. The protein operates within carbohydrate degradation; glycolysis; pyruvate from D-glyceraldehyde 3-phosphate: step 2/5. The protein is Phosphoglycerate kinase of Neisseria meningitidis serogroup A / serotype 4A (strain DSM 15465 / Z2491).